Consider the following 1211-residue polypeptide: DNA polymerase beta (1211 aa).

A run of 4 repeats spans residues 1074–1077 (KPAG), 1078–1081 (KPAG), 1082–1085 (NPAG), and 1086–1089 (NPAG). The interval 1074-1089 (KPAGKPAGNPAGNPAG) is 4 X 4 AA tandem repeats of [NK]-[P]-A-G.

It belongs to the DNA polymerase type-B family.

It carries out the reaction DNA(n) + a 2'-deoxyribonucleoside 5'-triphosphate = DNA(n+1) + diphosphate. Its function is as follows. DNA-directed DNA polymerase involved in viral DNA replication. This chain is DNA polymerase beta (DPOL), found in African swine fever virus (strain Badajoz 1971 Vero-adapted) (Ba71V).